The chain runs to 380 residues: Probable dual-specificity RNA methyltransferase RlmN (380 aa).

The active-site Proton acceptor is the glutamate 112. The Radical SAM core domain maps to 118-358; sequence YPDRVTACLS…TTVRDTRGRE (241 aa). Cysteine 125 and cysteine 363 form a disulfide bridge. [4Fe-4S] cluster is bound by residues cysteine 132, cysteine 136, and cysteine 139. Residues 187 to 188, serine 221, 244 to 246, and asparagine 320 each bind S-adenosyl-L-methionine; these read GE and SLH. Catalysis depends on cysteine 363, which acts as the S-methylcysteine intermediate.

This sequence belongs to the radical SAM superfamily. RlmN family. [4Fe-4S] cluster is required as a cofactor.

It localises to the cytoplasm. It catalyses the reaction adenosine(2503) in 23S rRNA + 2 reduced [2Fe-2S]-[ferredoxin] + 2 S-adenosyl-L-methionine = 2-methyladenosine(2503) in 23S rRNA + 5'-deoxyadenosine + L-methionine + 2 oxidized [2Fe-2S]-[ferredoxin] + S-adenosyl-L-homocysteine. It carries out the reaction adenosine(37) in tRNA + 2 reduced [2Fe-2S]-[ferredoxin] + 2 S-adenosyl-L-methionine = 2-methyladenosine(37) in tRNA + 5'-deoxyadenosine + L-methionine + 2 oxidized [2Fe-2S]-[ferredoxin] + S-adenosyl-L-homocysteine. Functionally, specifically methylates position 2 of adenine 2503 in 23S rRNA and position 2 of adenine 37 in tRNAs. This chain is Probable dual-specificity RNA methyltransferase RlmN, found in Salinispora arenicola (strain CNS-205).